The sequence spans 161 residues: Probable ribosome biogenesis protein RLP24 (161 aa).

It belongs to the eukaryotic ribosomal protein eL24 family. Associated with nucleolar and cytoplasmic pre-60S particles. At the end of biogenesis it dissociates from cytoplasmic pre-60S particles and is likely to be exchanged for its ribosomal homolog, RPL24.

Its subcellular location is the nucleus. The protein resides in the nucleolus. Functionally, involved in the biogenesis of the 60S ribosomal subunit. Ensures the docking of GTPBP4/NOG1 to pre-60S particles. In Danio rerio (Zebrafish), this protein is Probable ribosome biogenesis protein RLP24 (rsl24d1).